The primary structure comprises 482 residues: Nicotine dehydrogenase (482 aa).

Residues 1–38 (MSDKTKTNEGFSRRSFIGSAAVVTAGVAGLGAIDAASA) constitute a signal peptide (tat-type signal). Ala-64, Glu-83, Ala-84, Arg-85, Arg-91, Trp-108, and Val-279 together coordinate FAD. Thr-381 contacts (S)-nicotine. Ala-453, Asn-462, and Ile-463 together coordinate FAD.

It belongs to the flavin monoamine oxidase family. As to quaternary structure, monomer in solution. Homodimer in solution. Forms homodimers in the crystal. FAD serves as cofactor. In terms of processing, predicted to be exported by the Tat system. The position of the signal peptide cleavage has not been experimentally proven.

The protein resides in the periplasm. The catalysed reaction is (S)-nicotine + 2 Fe(III)-[cytochrome c] = N-methylmyosmine + 2 Fe(II)-[cytochrome c] + 2 H(+). Its pathway is alkaloid degradation; nicotine degradation. With respect to regulation, the catalytic rate is not significantly affected by pH. Its function is as follows. Involved in nicotine degradation. Catalyzes the conversion of nicotine to N-methylmyosmine. N-methylmyosmine undergoes spontaneous hydrolysis to form pseudooxynicotine (PN). S-nicotine is the optimal substrate. Has lower activity with some nicotine analogs, but shows no activity towards neurotransmitters, including serotonin, dopamine, and norepinephrine, nicotine metabolites and common neuroactive drugs. The enzyme is stereospecific with poor activity with (R)-nicotine as the substrate. The c-type cytochrome protein CycN is the physiological electron acceptor. O(2) is a poor electron acceptor. The polypeptide is Nicotine dehydrogenase (Pseudomonas putida (strain DSM 28022 / S16)).